Reading from the N-terminus, the 298-residue chain is Probable 2-(5''-triphosphoribosyl)-3'-dephosphocoenzyme-A synthase (298 aa).

It belongs to the CitG/MdcB family.

The enzyme catalyses 3'-dephospho-CoA + ATP = 2'-(5''-triphospho-alpha-D-ribosyl)-3'-dephospho-CoA + adenine. In Salmonella arizonae (strain ATCC BAA-731 / CDC346-86 / RSK2980), this protein is Probable 2-(5''-triphosphoribosyl)-3'-dephosphocoenzyme-A synthase.